We begin with the raw amino-acid sequence, 184 residues long: dCTP deaminase (184 aa).

DCTP is bound by residues 107-112 (KSTYAR), 131-133 (TLE), Gln152, Tyr166, and Gln176. Catalysis depends on Glu133, which acts as the Proton donor/acceptor.

This sequence belongs to the dCTP deaminase family. As to quaternary structure, homotrimer.

The catalysed reaction is dCTP + H2O + H(+) = dUTP + NH4(+). It functions in the pathway pyrimidine metabolism; dUMP biosynthesis; dUMP from dCTP (dUTP route): step 1/2. In terms of biological role, catalyzes the deamination of dCTP to dUTP. This chain is dCTP deaminase, found in Rhizorhabdus wittichii (strain DSM 6014 / CCUG 31198 / JCM 15750 / NBRC 105917 / EY 4224 / RW1) (Sphingomonas wittichii).